The chain runs to 376 residues: Alanine racemase (376 aa).

Catalysis depends on Lys40, which acts as the Proton acceptor; specific for D-alanine. Lys40 is modified (N6-(pyridoxal phosphate)lysine). Arg138 is a binding site for substrate. Residue Tyr270 is the Proton acceptor; specific for L-alanine of the active site. Residue Met317 participates in substrate binding.

Belongs to the alanine racemase family. Requires pyridoxal 5'-phosphate as cofactor.

The catalysed reaction is L-alanine = D-alanine. Its pathway is amino-acid biosynthesis; D-alanine biosynthesis; D-alanine from L-alanine: step 1/1. Catalyzes the interconversion of L-alanine and D-alanine. May also act on other amino acids. The chain is Alanine racemase (alr) from Lactobacillus acidophilus (strain ATCC 700396 / NCK56 / N2 / NCFM).